Here is a 388-residue protein sequence, read N- to C-terminus: Galactokinase (388 aa).

33-36 (EHTD) lines the substrate pocket. Residues Ser67 and 124–130 (GAGLSSS) contribute to the ATP site. 2 residues coordinate Mg(2+): Ser130 and Glu162. Catalysis depends on Asp174, which acts as the Proton acceptor. Tyr224 is a binding site for substrate.

The protein belongs to the GHMP kinase family. GalK subfamily.

It localises to the cytoplasm. It carries out the reaction alpha-D-galactose + ATP = alpha-D-galactose 1-phosphate + ADP + H(+). The protein operates within carbohydrate metabolism; galactose metabolism. In terms of biological role, catalyzes the transfer of the gamma-phosphate of ATP to D-galactose to form alpha-D-galactose-1-phosphate (Gal-1-P). In Lacticaseibacillus paracasei (strain ATCC 334 / BCRC 17002 / CCUG 31169 / CIP 107868 / KCTC 3260 / NRRL B-441) (Lactobacillus paracasei), this protein is Galactokinase.